The chain runs to 131 residues: Small ribosomal subunit protein bS6 (131 aa).

Residues E98–E131 form a disordered region. Positions K104–F116 are enriched in basic and acidic residues. A compositionally biased stretch (acidic residues) spans T120 to E131.

The protein belongs to the bacterial ribosomal protein bS6 family.

In terms of biological role, binds together with bS18 to 16S ribosomal RNA. This is Small ribosomal subunit protein bS6 from Cronobacter sakazakii (strain ATCC BAA-894) (Enterobacter sakazakii).